Reading from the N-terminus, the 188-residue chain is dCTP deaminase (188 aa).

DCTP-binding positions include 111 to 116 (KSTYAR), 135 to 137 (TLE), glutamine 156, tyrosine 170, lysine 179, and glutamine 180. Catalysis depends on glutamate 137, which acts as the Proton donor/acceptor.

Belongs to the dCTP deaminase family. Homotrimer.

It carries out the reaction dCTP + H2O + H(+) = dUTP + NH4(+). Its pathway is pyrimidine metabolism; dUMP biosynthesis; dUMP from dCTP (dUTP route): step 1/2. In terms of biological role, catalyzes the deamination of dCTP to dUTP. This Orientia tsutsugamushi (strain Ikeda) (Rickettsia tsutsugamushi) protein is dCTP deaminase.